Reading from the N-terminus, the 625-residue chain is tRNA uridine 5-carboxymethylaminomethyl modification enzyme MnmG (625 aa).

Residues 9–14 (GGGHAG), Val-121, and Ser-176 each bind FAD. 270–284 (GPRYCPSIEDKIYRF) provides a ligand contact to NAD(+). Gln-367 lines the FAD pocket.

Belongs to the MnmG family. As to quaternary structure, homodimer. Heterotetramer of two MnmE and two MnmG subunits. The cofactor is FAD.

Its subcellular location is the cytoplasm. In terms of biological role, NAD-binding protein involved in the addition of a carboxymethylaminomethyl (cmnm) group at the wobble position (U34) of certain tRNAs, forming tRNA-cmnm(5)s(2)U34. The polypeptide is tRNA uridine 5-carboxymethylaminomethyl modification enzyme MnmG (Nitratiruptor sp. (strain SB155-2)).